Reading from the N-terminus, the 298-residue chain is Probable tRNA(His) guanylyltransferase (298 aa).

The Mg(2+) site is built by Asp58, Gly59, and Asp105. GTP contacts are provided by residues 58 to 63 (DGRNFH) and 104 to 105 (SD).

This sequence belongs to the tRNA(His) guanylyltransferase family. As to quaternary structure, homotetramer. Interacts with MFN1 and MFN2; functions as a guanyl-nucleotide exchange factor/GEF for MFN2 and also probably MFN1. It depends on Mg(2+) as a cofactor.

Its subcellular location is the cytoplasm. The protein resides in the mitochondrion. The catalysed reaction is a 5'-end ribonucleotide-tRNA(His) + GTP + ATP + H2O = a 5'-end phospho-guanosine-ribonucleotide-tRNA(His) + AMP + 2 diphosphate + H(+). In terms of biological role, adds a GMP to the 5'-end of tRNA(His) after transcription and RNase P cleavage. This step is essential for proper recognition of the tRNA and for the fidelity of protein synthesis. Also functions as a guanyl-nucleotide exchange factor/GEF for the MFN1 and MFN2 mitofusins thereby regulating mitochondrial fusion. By regulating both mitochondrial dynamics and bioenergetic function, it contributes to cell survival following oxidative stress. The chain is Probable tRNA(His) guanylyltransferase (THG1L) from Bos taurus (Bovine).